Here is a 298-residue protein sequence, read N- to C-terminus: 4-hydroxy-tetrahydrodipicolinate synthase (298 aa).

Thr51 provides a ligand contact to pyruvate. Tyr139 functions as the Proton donor/acceptor in the catalytic mechanism. The active-site Schiff-base intermediate with substrate is Lys167. Ile209 contacts pyruvate.

The protein belongs to the DapA family. As to quaternary structure, homotetramer; dimer of dimers.

The protein localises to the cytoplasm. The enzyme catalyses L-aspartate 4-semialdehyde + pyruvate = (2S,4S)-4-hydroxy-2,3,4,5-tetrahydrodipicolinate + H2O + H(+). It participates in amino-acid biosynthesis; L-lysine biosynthesis via DAP pathway; (S)-tetrahydrodipicolinate from L-aspartate: step 3/4. Its function is as follows. Catalyzes the condensation of (S)-aspartate-beta-semialdehyde [(S)-ASA] and pyruvate to 4-hydroxy-tetrahydrodipicolinate (HTPA). This chain is 4-hydroxy-tetrahydrodipicolinate synthase, found in Haemophilus influenzae (strain 86-028NP).